The chain runs to 72 residues: Large ribosomal subunit protein bL31 (72 aa).

Residues Cys17, Cys19, Cys37, and Cys40 each coordinate Zn(2+).

This sequence belongs to the bacterial ribosomal protein bL31 family. Type A subfamily. In terms of assembly, part of the 50S ribosomal subunit. Zn(2+) is required as a cofactor.

In terms of biological role, binds the 23S rRNA. The sequence is that of Large ribosomal subunit protein bL31 from Clostridium botulinum (strain ATCC 19397 / Type A).